Reading from the N-terminus, the 310-residue chain is Upstream stimulatory factor 1 (310 aa).

Residues 1-17 (MKGQQKTAETEEGTVQI) show a composition bias toward polar residues. 2 disordered regions span residues 1–26 (MKGQ…ATGE) and 171–209 (QGGS…EVER). Residues 190 to 209 (EAPRTTRDEKRRAQHNEVER) are compositionally biased toward basic and acidic residues. Residues 199–254 (KRRAQHNEVERRRRDKINNWIVQLSKIIPDCSMESTKSGQSKGGILSKACDYIQEL) enclose the bHLH domain. The tract at residues 271–292 (LQLDNDVLRQQVEDLKNKNLLL) is leucine-zipper. K306 is covalently cross-linked (Glycyl lysine isopeptide (Lys-Gly) (interchain with G-Cter in SUMO2)).

Efficient DNA binding requires dimerization with another bHLH protein. Binds DNA as a homodimer or a heterodimer (USF1/USF2).

The protein localises to the nucleus. Its function is as follows. Transcription factor that binds to a symmetrical DNA sequence (E-boxes) (5'-CACGTG-3') that is found in a variety of viral and cellular promoters. The sequence is that of Upstream stimulatory factor 1 (Usf1) from Mus musculus (Mouse).